The sequence spans 175 residues: SsrA-binding protein (175 aa).

This sequence belongs to the SmpB family.

Its subcellular location is the cytoplasm. Its function is as follows. Required for rescue of stalled ribosomes mediated by trans-translation. Binds to transfer-messenger RNA (tmRNA), required for stable association of tmRNA with ribosomes. tmRNA and SmpB together mimic tRNA shape, replacing the anticodon stem-loop with SmpB. tmRNA is encoded by the ssrA gene; the 2 termini fold to resemble tRNA(Ala) and it encodes a 'tag peptide', a short internal open reading frame. During trans-translation Ala-aminoacylated tmRNA acts like a tRNA, entering the A-site of stalled ribosomes, displacing the stalled mRNA. The ribosome then switches to translate the ORF on the tmRNA; the nascent peptide is terminated with the 'tag peptide' encoded by the tmRNA and targeted for degradation. The ribosome is freed to recommence translation, which seems to be the essential function of trans-translation. This is SsrA-binding protein from Prochlorococcus marinus subsp. pastoris (strain CCMP1986 / NIES-2087 / MED4).